Reading from the N-terminus, the 187-residue chain is Nicotinamide-nucleotide adenylyltransferase (187 aa).

The protein belongs to the archaeal NMN adenylyltransferase family.

The protein localises to the cytoplasm. The enzyme catalyses beta-nicotinamide D-ribonucleotide + ATP + H(+) = diphosphate + NAD(+). It functions in the pathway cofactor biosynthesis; NAD(+) biosynthesis; NAD(+) from nicotinamide D-ribonucleotide: step 1/1. In Thermococcus onnurineus (strain NA1), this protein is Nicotinamide-nucleotide adenylyltransferase.